Consider the following 495-residue polypeptide: MADRNLRDLLAPLGIDAPVRELREMTLDSRKSSAGDLFVAIKGHQTDGRHYIPQAIAQGVAAVIAEAQGEVDNGTVQIMHGVPVVYVNDLNNKLSQLAGEFYCHPGDKLHLIGVTGTNGKTTTTQLLAQWSHGLGETSAVMGTVGNGLLGRVAPSENTTGSAVDIQLDLQQLVRQEATFAAMEVSSHGLVQGRVAALPFEAAVFTNLSRDHLDYHGDMEHYEAAKWLLFSTHNVKQQIINADDEIGLKWLSRLPQAVAVTMENRLPENWQGRWLAAREIKYHDKGVSITFESSWGGGTIDSSLMGAFNVSNLLLALSTLLALDYPLEKLLETASCLEPVCGRMEVFTTPGKPVVVVDYAHTPDALEKALMAARLHCQGKLWCVFGCGGDRDKGKRPLMGGVAEQLADYVIVTDDNPRNEEPQAIIADILTGFLDPGRAIAIHGRVEAVTNAIMQAKADDVVLIAGKGHEDYQLVGHRRLDYSDRLTVARLLGVIA.

Residues Leu-27, Ser-29, and His-44–Thr-46 contribute to the UDP-N-acetyl-alpha-D-muramoyl-L-alanyl-D-glutamate site. Position 116–122 (Gly-116–Thr-122) interacts with ATP. Residues Asn-157, Thr-158–Thr-159, Ser-185, Gln-191, and Arg-193 contribute to the UDP-N-acetyl-alpha-D-muramoyl-L-alanyl-D-glutamate site. Lys-225 is subject to N6-carboxylysine. Meso-2,6-diaminopimelate is bound by residues Arg-390, Asp-414 to Arg-417, Gly-465, and Glu-469. A Meso-diaminopimelate recognition motif motif is present at residues Asp-414 to Arg-417.

It belongs to the MurCDEF family. MurE subfamily. Mg(2+) serves as cofactor. Carboxylation is probably crucial for Mg(2+) binding and, consequently, for the gamma-phosphate positioning of ATP.

Its subcellular location is the cytoplasm. The enzyme catalyses UDP-N-acetyl-alpha-D-muramoyl-L-alanyl-D-glutamate + meso-2,6-diaminopimelate + ATP = UDP-N-acetyl-alpha-D-muramoyl-L-alanyl-gamma-D-glutamyl-meso-2,6-diaminopimelate + ADP + phosphate + H(+). It participates in cell wall biogenesis; peptidoglycan biosynthesis. Its function is as follows. Catalyzes the addition of meso-diaminopimelic acid to the nucleotide precursor UDP-N-acetylmuramoyl-L-alanyl-D-glutamate (UMAG) in the biosynthesis of bacterial cell-wall peptidoglycan. The chain is UDP-N-acetylmuramoyl-L-alanyl-D-glutamate--2,6-diaminopimelate ligase from Photorhabdus laumondii subsp. laumondii (strain DSM 15139 / CIP 105565 / TT01) (Photorhabdus luminescens subsp. laumondii).